Here is a 953-residue protein sequence, read N- to C-terminus: Nonsense-mediated mRNA decay factor SMG8 (953 aa).

Disordered stretches follow at residues 571–604 (AQDA…CSQP) and 629–653 (PCFD…ESNN). A compositionally biased stretch (acidic residues) spans 574–586 (AELDPDEEDEELP). Positions 595–604 (ITQSNGCSQP) are enriched in polar residues. Residues 634–653 (SSSSEAESTCSGTSSEESNN) show a composition bias toward low complexity.

Belongs to the SMG8 family.

In terms of biological role, involved in nonsense-mediated decay (NMD) of mRNAs containing premature stop codons. Probable component of kinase complex containing nonC and recruited to stalled ribosomes. The polypeptide is Nonsense-mediated mRNA decay factor SMG8 (Drosophila persimilis (Fruit fly)).